The sequence spans 769 residues: MDIGKKHVIPKSQYRRKRREFFHNEDREENLNQHQDKQNIDNTTSKKADKQIHKDSIDKHERFKNSLSSHLEQRNRDVNENKAEESKSNQDSKSAYNRDHYLTDDVSKKQNSLDSVDQDTEKSKYYEQNSEATLSTKSTDKVESTEMRKLSSDKNKVGHEEQHVLSKPSEHDKETRIDSESSRTDSDSSMQTEKIKKDSSDGNKSSNLKSEVISDKSNTVPKLSESDDEVNNQKPLTLPEEQKLKRQQSQNEQTKTYTYGDSEQNDKSNHENDLSHHIPSISDDKDNVMRENHIVDDNPDNDINTPSLSKTDDDRKLDEKIHVEDKHKQNADSSETVGYQSQSTASHRSTEKRNISINDHDKLNGQKTNTKTSANNNQKKATSKLNKGRATNNNYSDILKKFWMMYWPKLVILMGIIILIVILNAIFNNVNKNDRMNDNNDADAQKYTTTMKNANNTVKSVVTVENETSKDSSLPKDKASQDEVGSGVVYKKSGDTLYIVTNAHVVGDKENQKITFSNNKSVVGKVLGKDKWSDLAVVKATSSDSSVKEIAIGDSNNLVLGEPILVVGNPLGVDFKGTVTEGIISGLNRNVPIDFDKDNKYDMLMKAFQIDASVNPGNSGGAVVNREGKLIGVVAAKISMPNVENMSFAIPVNEVQKIVKDLETKGKIDYPDVGVKMKNIASLNSFERQAVKLPGKVKNGVVVDQVDNNGLADQSGLKKGDVITELDGKLLEDDLRFRQIIFSHKDDLKSITAKIYRDGKEKEINIKLK.

Over residues 1–20 the composition is skewed to basic residues; it reads MDIGKKHVIPKSQYRRKRRE. Residues 1–390 form a disordered region; that stretch reads MDIGKKHVIP…ATSKLNKGRA (390 aa). 2 stretches are compositionally biased toward basic and acidic residues: residues 21–64 and 71–108; these read FFHN…ERFK and LEQR…DVSK. Residues 126–137 are compositionally biased toward polar residues; it reads YEQNSEATLSTK. Basic and acidic residues predominate over residues 138-186; it reads STDKVESTEMRKLSSDKNKVGHEEQHVLSKPSEHDKETRIDSESSRTDS. The span at 247 to 262 shows a compositional bias: polar residues; that stretch reads QQSQNEQTKTYTYGDS. Composition is skewed to basic and acidic residues over residues 264–296 and 310–330; these read QNDK…HIVD and KTDD…HKQN. The segment covering 331–347 has biased composition (polar residues); it reads ADSSETVGYQSQSTASH. A compositionally biased stretch (basic and acidic residues) spans 348 to 364; the sequence is RSTEKRNISINDHDKLN. The span at 365 to 390 shows a compositional bias: polar residues; the sequence is GQKTNTKTSANNNQKKATSKLNKGRA. The chain crosses the membrane as a helical span at residues 410 to 430; it reads LVILMGIIILIVILNAIFNNV. Residues His-504, Asp-534, and Ser-619 each act as charge relay system in the active site. Residues 680-733 enclose the PDZ domain; it reads IASLNSFERQAVKLPGKVKNGVVVDQVDNNGLADQSGLKKGDVITELDGKLLED.

It belongs to the peptidase S1C family.

The protein localises to the cell membrane. The chain is Serine protease HtrA-like from Staphylococcus aureus (strain COL).